A 440-amino-acid polypeptide reads, in one-letter code: L-seryl-tRNA(Sec) selenium transferase (440 aa).

Lys282 is modified (N6-(pyridoxal phosphate)lysine).

Belongs to the SelA family. Pyridoxal 5'-phosphate serves as cofactor.

It localises to the cytoplasm. The catalysed reaction is L-seryl-tRNA(Sec) + selenophosphate + H(+) = L-selenocysteinyl-tRNA(Sec) + phosphate. It participates in aminoacyl-tRNA biosynthesis; selenocysteinyl-tRNA(Sec) biosynthesis; selenocysteinyl-tRNA(Sec) from L-seryl-tRNA(Sec) (bacterial route): step 1/1. In terms of biological role, converts seryl-tRNA(Sec) to selenocysteinyl-tRNA(Sec) required for selenoprotein biosynthesis. In Campylobacter jejuni subsp. doylei (strain ATCC BAA-1458 / RM4099 / 269.97), this protein is L-seryl-tRNA(Sec) selenium transferase.